The primary structure comprises 372 residues: Glutamate 5-kinase (372 aa).

Residue Lys14 participates in ATP binding. Positions 54, 141, and 153 each coordinate substrate. Residue 173–174 (TD) participates in ATP binding. The PUA domain maps to 280-358 (AGAVVLDNGA…ADIAAILGFV (79 aa)).

This sequence belongs to the glutamate 5-kinase family.

The protein resides in the cytoplasm. It catalyses the reaction L-glutamate + ATP = L-glutamyl 5-phosphate + ADP. The protein operates within amino-acid biosynthesis; L-proline biosynthesis; L-glutamate 5-semialdehyde from L-glutamate: step 1/2. Functionally, catalyzes the transfer of a phosphate group to glutamate to form L-glutamate 5-phosphate. The polypeptide is Glutamate 5-kinase (Janthinobacterium sp. (strain Marseille) (Minibacterium massiliensis)).